The chain runs to 381 residues: MNAPQKHSAPITVEVALGDRAYEIVIGRDVIASLGERIAKLRPGARTAIVTDRTVAKTWLKRTEEVLDQVGIAHASVIVGEGESSKSYAGLEQVCEALIAAKIERNDLVIALGGGVIGDLAGFSASLLRRGVDFVQVPTSLLAQVDSSVGGKTGINSPQGKNLIGTFHQPVLVLADTAILDTLSPRQFRAGYAEVAKYGALGDEAFFAWLEANHAELFSGGAAREHAVATSCRAKAAIVARDERETGDRALLNLGHTFGHALEAATGFSDRLFHGEGVAIGMVLAAEFSAERGMMPAADAQRLAKHLADVGLPTRLQDIAGFTQEGLADADRLMALMSQDKKVKRGELTFILMEGIGRAVIANKVEPAPVRDFLQRKLAQA.

Residues 81–86 (EGESSK), 115–119 (GVIGD), 139–140 (TS), lysine 152, and lysine 161 contribute to the NAD(+) site. Zn(2+) contacts are provided by glutamate 194, histidine 256, and histidine 274.

The protein belongs to the sugar phosphate cyclases superfamily. Dehydroquinate synthase family. It depends on Co(2+) as a cofactor. Zn(2+) is required as a cofactor. Requires NAD(+) as cofactor.

The protein resides in the cytoplasm. It carries out the reaction 7-phospho-2-dehydro-3-deoxy-D-arabino-heptonate = 3-dehydroquinate + phosphate. Its pathway is metabolic intermediate biosynthesis; chorismate biosynthesis; chorismate from D-erythrose 4-phosphate and phosphoenolpyruvate: step 2/7. Functionally, catalyzes the conversion of 3-deoxy-D-arabino-heptulosonate 7-phosphate (DAHP) to dehydroquinate (DHQ). This chain is 3-dehydroquinate synthase, found in Rhodopseudomonas palustris (strain TIE-1).